A 508-amino-acid chain; its full sequence is Photosystem II CP47 reaction center protein (508 aa).

A run of 6 helical transmembrane segments spans residues 21 to 36 (AVHI…WAGS), 101 to 115 (IVFS…IWHW), 140 to 156 (GIHL…FGAF), 203 to 218 (IAAG…FHLS), 237 to 252 (VLSS…AFVV), and 457 to 472 (SFAL…HGAR).

Belongs to the PsbB/PsbC family. PsbB subfamily. PSII is composed of 1 copy each of membrane proteins PsbA, PsbB, PsbC, PsbD, PsbE, PsbF, PsbH, PsbI, PsbJ, PsbK, PsbL, PsbM, PsbT, PsbX, PsbY, PsbZ, Psb30/Ycf12, at least 3 peripheral proteins of the oxygen-evolving complex and a large number of cofactors. It forms dimeric complexes. Interacts with PAM68. Interacts with HHL1. The cofactor is Binds multiple chlorophylls. PSII binds additional chlorophylls, carotenoids and specific lipids..

It localises to the plastid. The protein resides in the chloroplast thylakoid membrane. One of the components of the core complex of photosystem II (PSII). It binds chlorophyll and helps catalyze the primary light-induced photochemical processes of PSII. PSII is a light-driven water:plastoquinone oxidoreductase, using light energy to abstract electrons from H(2)O, generating O(2) and a proton gradient subsequently used for ATP formation. This chain is Photosystem II CP47 reaction center protein, found in Arabidopsis thaliana (Mouse-ear cress).